The sequence spans 242 residues: 1-(5-phosphoribosyl)-5-[(5-phosphoribosylamino)methylideneamino] imidazole-4-carboxamide isomerase (242 aa).

D10 acts as the Proton acceptor in catalysis.

This sequence belongs to the HisA/HisF family.

It is found in the cytoplasm. The catalysed reaction is 1-(5-phospho-beta-D-ribosyl)-5-[(5-phospho-beta-D-ribosylamino)methylideneamino]imidazole-4-carboxamide = 5-[(5-phospho-1-deoxy-D-ribulos-1-ylimino)methylamino]-1-(5-phospho-beta-D-ribosyl)imidazole-4-carboxamide. Its pathway is amino-acid biosynthesis; L-histidine biosynthesis; L-histidine from 5-phospho-alpha-D-ribose 1-diphosphate: step 4/9. The chain is 1-(5-phosphoribosyl)-5-[(5-phosphoribosylamino)methylideneamino] imidazole-4-carboxamide isomerase from Corynebacterium diphtheriae (strain ATCC 700971 / NCTC 13129 / Biotype gravis).